A 1563-amino-acid chain; its full sequence is Pentafunctional AROM polypeptide (1563 aa).

A 3-dehydroquinate synthase region spans residues 1-382; the sequence is MAESSSNPTR…YEPKASVVED (382 aa). NAD(+)-binding positions include 48-50, 82-85, 113-115, and aspartate 118; these read DTN, EYSK, and GGV. Arginine 129 lines the 7-phospho-2-dehydro-3-deoxy-D-arabino-heptonate pocket. 138–139 is an NAD(+) binding site; it reads TT. 7-phospho-2-dehydro-3-deoxy-D-arabino-heptonate is bound by residues aspartate 145 and lysine 151. Position 160 (lysine 160) interacts with NAD(+). Asparagine 161 provides a ligand contact to 7-phospho-2-dehydro-3-deoxy-D-arabino-heptonate. NAD(+) is bound by residues 178 to 181 and asparagine 189; that span reads FLNT. Zn(2+) is bound at residue glutamate 193. 7-phospho-2-dehydro-3-deoxy-D-arabino-heptonate is bound by residues 193–196 and lysine 248; that span reads EVIK. The Proton acceptor; for 3-dehydroquinate synthase activity role is filled by glutamate 258. 7-phospho-2-dehydro-3-deoxy-D-arabino-heptonate-binding positions include 262–266 and histidine 269; that span reads RNLLN. Histidine 269 is a Zn(2+) binding site. The active-site Proton acceptor; for 3-dehydroquinate synthase activity is the histidine 273. Residues histidine 285 and lysine 354 each contribute to the 7-phospho-2-dehydro-3-deoxy-D-arabino-heptonate site. Histidine 285 is a Zn(2+) binding site. The EPSP synthase stretch occupies residues 395–834; that stretch reads VHAGVPKDLK…WDTMSNYFKS (440 aa). Residue cysteine 816 is the For EPSP synthase activity of the active site. Basic and acidic residues predominate over residues 836 to 850; sequence LEGEEEPHSSHVSHE. Positions 836–857 are disordered; sequence LEGEEEPHSSHVSHEKPRKGNP. Residues 857–1051 are shikimate kinase; it reads PKSIFIIGMR…KKKPQSSFVS (195 aa). Position 864–871 (864–871) interacts with ATP; the sequence is GMRGAGKS. Residues 1052–1265 form a 3-dehydroquinase region; the sequence is LTVPNVSKAL…AAPGQLSAAE (214 aa). Histidine 1168 serves as the catalytic Proton acceptor; for 3-dehydroquinate dehydratase activity. Residue lysine 1196 is the Schiff-base intermediate with substrate; for 3-dehydroquinate dehydratase activity of the active site. The segment at 1278 to 1563 is shikimate dehydrogenase; sequence PRSFYLFGKP…TDAQAAVMGN (286 aa).

The protein in the N-terminal section; belongs to the sugar phosphate cyclases superfamily. Dehydroquinate synthase family. In the 2nd section; belongs to the EPSP synthase family. It in the 3rd section; belongs to the shikimate kinase family. This sequence in the 4th section; belongs to the type-I 3-dehydroquinase family. The protein in the C-terminal section; belongs to the shikimate dehydrogenase family. As to quaternary structure, homodimer. It depends on Zn(2+) as a cofactor.

Its subcellular location is the cytoplasm. The catalysed reaction is 7-phospho-2-dehydro-3-deoxy-D-arabino-heptonate = 3-dehydroquinate + phosphate. It carries out the reaction 3-dehydroquinate = 3-dehydroshikimate + H2O. The enzyme catalyses shikimate + NADP(+) = 3-dehydroshikimate + NADPH + H(+). It catalyses the reaction shikimate + ATP = 3-phosphoshikimate + ADP + H(+). The catalysed reaction is 3-phosphoshikimate + phosphoenolpyruvate = 5-O-(1-carboxyvinyl)-3-phosphoshikimate + phosphate. The protein operates within metabolic intermediate biosynthesis; chorismate biosynthesis; chorismate from D-erythrose 4-phosphate and phosphoenolpyruvate: step 2/7. It participates in metabolic intermediate biosynthesis; chorismate biosynthesis; chorismate from D-erythrose 4-phosphate and phosphoenolpyruvate: step 3/7. Its pathway is metabolic intermediate biosynthesis; chorismate biosynthesis; chorismate from D-erythrose 4-phosphate and phosphoenolpyruvate: step 4/7. It functions in the pathway metabolic intermediate biosynthesis; chorismate biosynthesis; chorismate from D-erythrose 4-phosphate and phosphoenolpyruvate: step 5/7. The protein operates within metabolic intermediate biosynthesis; chorismate biosynthesis; chorismate from D-erythrose 4-phosphate and phosphoenolpyruvate: step 6/7. The AROM polypeptide catalyzes 5 consecutive enzymatic reactions in prechorismate polyaromatic amino acid biosynthesis. This is Pentafunctional AROM polypeptide from Sordaria macrospora (strain ATCC MYA-333 / DSM 997 / K(L3346) / K-hell).